Reading from the N-terminus, the 427-residue chain is Nuclear distribution protein PAC1-2 (427 aa).

The region spanning 8–40 (QKDDLNKSIAEYLYAQDLTEIADSLCARLSLDY) is the LisH domain. Residues 58–82 (SVIRLQKKLIESENRYTALQEDIAA) are a coiled coil. WD repeat units follow at residues 106–147 (SHRA…RTLK), 149–187 (HTRE…NAGY), 194–233 (GHEH…CIRT), 236–275 (GHED…MKME), 278–336 (GHGH…ELRT), 339–378 (GHND…CMXV), and 381–420 (AHSH…SRIM).

Belongs to the WD repeat LIS1/nudF family. Self-associates. Interacts with NDL1 and dynein.

The protein resides in the cytoplasm. Its subcellular location is the cytoskeleton. It localises to the spindle pole. Its function is as follows. Positively regulates the activity of the minus-end directed microtubule motor protein dynein. May enhance dynein-mediated microtubule sliding by targeting dynein to the microtubule plus end. Required for nuclear migration during vegetative growth as well as development. Required for retrograde early endosome (EE) transport from the hyphal tip. Required for localization of dynein to the mitotic spindle poles. Recruits additional proteins to the dynein complex at SPBs. This is Nuclear distribution protein PAC1-2 from Postia placenta (strain ATCC 44394 / Madison 698-R) (Brown rot fungus).